A 297-amino-acid chain; its full sequence is 2,3,4,5-tetrahydropyridine-2,6-dicarboxylate N-succinyltransferase (297 aa).

Asp-148 and Glu-165 together coordinate Mg(2+). The active-site Acyl-anhydride intermediate is Glu-181. Succinyl-CoA-binding positions include Arg-183, Gly-198, Ser-201, Ala-224, 239–240, Gly-247, Lys-258, and 271–274; these read EA and RRDS.

It belongs to the type 2 tetrahydrodipicolinate N-succinyltransferase family. Homotrimer.

It is found in the cytoplasm. It catalyses the reaction (S)-2,3,4,5-tetrahydrodipicolinate + succinyl-CoA + H2O = (S)-2-succinylamino-6-oxoheptanedioate + CoA. Its pathway is amino-acid biosynthesis; L-lysine biosynthesis via DAP pathway; LL-2,6-diaminopimelate from (S)-tetrahydrodipicolinate (succinylase route): step 1/3. Catalyzes the conversion of the cyclic tetrahydrodipicolinate (THDP) into the acyclic N-succinyl-L-2-amino-6-oxopimelate using succinyl-CoA. The protein is 2,3,4,5-tetrahydropyridine-2,6-dicarboxylate N-succinyltransferase of Corynebacterium glutamicum (strain ATCC 13032 / DSM 20300 / JCM 1318 / BCRC 11384 / CCUG 27702 / LMG 3730 / NBRC 12168 / NCIMB 10025 / NRRL B-2784 / 534).